The sequence spans 713 residues: Phosphoribosylformylglycinamidine synthase subunit PurL (713 aa).

Histidine 32 is a catalytic residue. Tyrosine 35 contributes to the ATP binding site. Glutamate 76 contributes to the Mg(2+) binding site. Residues 77–80 (SHNH) and arginine 99 each bind substrate. The active-site Proton acceptor is histidine 78. Aspartate 100 provides a ligand contact to Mg(2+). Glutamine 224 lines the substrate pocket. Aspartate 252 provides a ligand contact to Mg(2+). Residue 296 to 298 (ESQ) participates in substrate binding. Positions 471 and 508 each coordinate ATP. Asparagine 509 is a Mg(2+) binding site. Serine 511 provides a ligand contact to substrate.

This sequence belongs to the FGAMS family. Monomer. Part of the FGAM synthase complex composed of 1 PurL, 1 PurQ and 2 PurS subunits.

The protein localises to the cytoplasm. The enzyme catalyses N(2)-formyl-N(1)-(5-phospho-beta-D-ribosyl)glycinamide + L-glutamine + ATP + H2O = 2-formamido-N(1)-(5-O-phospho-beta-D-ribosyl)acetamidine + L-glutamate + ADP + phosphate + H(+). It functions in the pathway purine metabolism; IMP biosynthesis via de novo pathway; 5-amino-1-(5-phospho-D-ribosyl)imidazole from N(2)-formyl-N(1)-(5-phospho-D-ribosyl)glycinamide: step 1/2. Its function is as follows. Part of the phosphoribosylformylglycinamidine synthase complex involved in the purines biosynthetic pathway. Catalyzes the ATP-dependent conversion of formylglycinamide ribonucleotide (FGAR) and glutamine to yield formylglycinamidine ribonucleotide (FGAM) and glutamate. The FGAM synthase complex is composed of three subunits. PurQ produces an ammonia molecule by converting glutamine to glutamate. PurL transfers the ammonia molecule to FGAR to form FGAM in an ATP-dependent manner. PurS interacts with PurQ and PurL and is thought to assist in the transfer of the ammonia molecule from PurQ to PurL. The polypeptide is Phosphoribosylformylglycinamidine synthase subunit PurL (Thermococcus sibiricus (strain DSM 12597 / MM 739)).